A 309-amino-acid chain; its full sequence is Ornithine carbamoyltransferase (309 aa).

Residues 56–59, glutamine 83, arginine 107, and 134–137 each bind carbamoyl phosphate; these read STRT and HPCQ. Residues asparagine 165, aspartate 223, and 227–228 each bind L-ornithine; that span reads SM. Carbamoyl phosphate contacts are provided by residues 263-264 and arginine 291; that span reads CL.

It belongs to the aspartate/ornithine carbamoyltransferase superfamily. OTCase family.

It is found in the cytoplasm. The enzyme catalyses carbamoyl phosphate + L-ornithine = L-citrulline + phosphate + H(+). It functions in the pathway amino-acid biosynthesis; L-arginine biosynthesis; L-arginine from L-ornithine and carbamoyl phosphate: step 1/3. Functionally, reversibly catalyzes the transfer of the carbamoyl group from carbamoyl phosphate (CP) to the N(epsilon) atom of ornithine (ORN) to produce L-citrulline. The sequence is that of Ornithine carbamoyltransferase from Burkholderia mallei (strain ATCC 23344).